The sequence spans 364 residues: N-alpha-acetyltransferase 30 (364 aa).

A compositionally biased stretch (pro residues) spans 1-18 (MAEVPPGPSSLLPPPAPA). Disordered regions lie at residues 1–21 (MAEV…AAPA), 39–65 (SEDE…TSAK), and 110–164 (EAAA…SDPA). A phosphoserine mark is found at Ser-39 and Ser-54. Positions 39-48 (SEDEEDDEEH) are enriched in acidic residues. Residues 126-135 (AEGHPGERPP) are compositionally biased toward basic and acidic residues. The segment covering 152–164 (AAAAAAGAASDPA) has biased composition (low complexity). Residues Ser-192, Ser-198, and Ser-201 each carry the phosphoserine modification. One can recognise an N-acetyltransferase domain in the interval 216-364 (RYVRYESELQ…DALRLKLWLR (149 aa)). Lys-235 bears the N6-acetyllysine mark.

The protein belongs to the acetyltransferase family. MAK3 subfamily. Component of the N-terminal acetyltransferase C (NatC) complex, which is composed of NAA35, NAA38 and NAA30.

Its subcellular location is the cytoplasm. It is found in the nucleus. The catalysed reaction is N-terminal L-methionyl-L-leucyl-[protein] + acetyl-CoA = N-terminal N(alpha)-acetyl-L-methionyl-L-leucyl-[protein] + CoA + H(+). It carries out the reaction N-terminal L-methionyl-L-isoleucyl-[protein] + acetyl-CoA = N-terminal N(alpha)-acetyl-L-methionyl-L-isoleucyl-[protein] + CoA + H(+). It catalyses the reaction N-terminal L-methionyl-L-phenylalanyl-[protein] + acetyl-CoA = N-terminal N(alpha)-acetyl-L-methionyl-L-phenylalanyl-[protein] + CoA + H(+). The enzyme catalyses N-terminal L-methionyl-L-tryptophyl-[protein] + acetyl-CoA = N-terminal N(alpha)-acetyl-L-methionyl-L-tryptophyl-[protein] + CoA + H(+). The catalysed reaction is N-terminal L-methionyl-L-tyrosyl-[protein] + acetyl-CoA = N-terminal N(alpha)-acetyl-L-methionyl-L-tyrosyl-[protein] + CoA + H(+). Its function is as follows. Catalytic subunit of the N-terminal acetyltransferase C (NatC) complex. Catalyzes acetylation of the N-terminal methionine residues of peptides beginning with Met-Leu-Ala and Met-Leu-Gly. N-terminal acetylation protects proteins from ubiquitination and degradation by the N-end rule pathway. Necessary for the lysosomal localization and function of ARL8B sugeesting that ARL8B is a NatC substrate. The chain is N-alpha-acetyltransferase 30 (Naa30) from Mus musculus (Mouse).